Here is a 932-residue protein sequence, read N- to C-terminus: MAAPTKCQLRGRLVLLCSLLGMLWEARASQIRYSVPEETEKGYIVGNISKDLALEPRELAERRVRIVSRGRTQLFSLNPRSGTLVTAGRIDREELCAQSPRCLVNFKVLVEDRVKLYGIEIEVTDINDSAPKFQAESLEVKINEIAVPGARYPLPEAIDPDVGVNSLQSYQLSPNHHFSLNVQTGDNGAINPELVLERALDREEATAHHLVLTASDGGEPRRSSTVRIHVTVLDTNDNAPVFAQRIYRVKVLENVPPGTWLLTATASDLDEGINGKVAYKFWKINEKQSLLFQLNENTGEISTAKSLDYEECSFYEMEIQAEDGGGLKGWTKVLISVEDVNDNRPEVTITSLFSPVREDAPQGTVILLFNAHDRDSGKNGQVVCSIQENLSFKLENSEEDYYRLLTAQILDREKASEYNITVTATDRGTPPLSTEIHITLQVTDINDNPPAFSQASYSVYLPENNARGTSIFSVIAYDPDSNENSRVIYSLAEDTIQGSPLSTYVSINSDTGVLYALCSFDYEQFRDLQMQVMASDSGSPPLSSNVSLRLFVLDQNDNAPEILYPALPTDGSTGVELAPRSAEPGYLVTKVVAVDRDSGQNAWLSYRLFKTSEPGLFSVGLHTGEVRTARALLDRDALKQSLVVAVQDHGQPPLSATVTLTVAIADSIPDILADLGSLQIPADLEASDLTLYLVVAVAVVSCVFLTFVITLLALRLRHWHSSHLLRATSDGLAGVPTSHFVGVDGVRAFLQTYSQEFSLTADSRKSHLIFPQPNYADTLISQQSCEKNEPLCVSVDSKFPIEDTPLVPQAPPNTDWRFSQAQRPGTSGSQNGDDTGTWPNNQFDTEMLQAMILASASEAADGSSTLGGGAGTMGLSARYGPQFTLQHVPDYRQNVYIPGSNATLTNAAGKRDGKAPAGGNGNKKKSGKKEKK.

Residues 1–28 (MAAPTKCQLRGRLVLLCSLLGMLWEARA) form the signal peptide. 6 Cadherin domains span residues 29-133 (SQIR…APKF), 134-242 (QAES…APVF), 243-347 (AQRI…RPEV), 348-452 (TITS…PPAF), 453-562 (SQAS…APEI), and 570-683 (DGST…IPAD). Topologically, residues 29-692 (SQIRYSVPEE…DLEASDLTLY (664 aa)) are extracellular. N-linked (GlcNAc...) asparagine glycosylation is found at asparagine 47 and asparagine 127. N-linked (GlcNAc...) asparagine glycans are attached at residues asparagine 389, asparagine 419, and asparagine 545. The chain crosses the membrane as a helical span at residues 693–713 (LVVAVAVVSCVFLTFVITLLA). Over 714-932 (LRLRHWHSSH…KKKSGKKEKK (219 aa)) the chain is Cytoplasmic. 2 disordered regions span residues 803–841 (DTPLVPQAPPNTDWRFSQAQRPGTSGSQNGDDTGTWPNN) and 902–932 (ATLTNAAGKRDGKAPAGGNGNKKKSGKKEKK). The segment covering 816-841 (WRFSQAQRPGTSGSQNGDDTGTWPNN) has biased composition (polar residues). Residues 922 to 932 (NKKKSGKKEKK) are compositionally biased toward basic residues.

The protein resides in the cell membrane. Functionally, potential calcium-dependent cell-adhesion protein. May be involved in the establishment and maintenance of specific neuronal connections in the brain. The polypeptide is Protocadherin gamma-A9 (PCDHGA9) (Pan troglodytes (Chimpanzee)).